The sequence spans 261 residues: Kallikrein 1-related peptidase b16 (261 aa).

The first 18 residues, 1–18, serve as a signal peptide directing secretion; the sequence is MWFLILFLALSLGGIDAA. Residues 19–24 constitute a propeptide, activation peptide; it reads PPVQSR. Positions 25–258 constitute a Peptidase S1 domain; that stretch reads IVGGFKCEKN…FNSWIKDTMM (234 aa). 5 disulfide bridges follow: C31–C173, C50–C66, C152–C219, C184–C198, and C209–C234. Catalysis depends on H65, which acts as the Charge relay system. N102 carries N-linked (GlcNAc...) asparagine glycosylation. Residue D120 is the Charge relay system of the active site. S213 functions as the Charge relay system in the catalytic mechanism.

It belongs to the peptidase S1 family. Kallikrein subfamily.

It catalyses the reaction Cleavage of the Leu-|-Leu bond in synthetic tetradecapeptide renin substrate, to produce angiotensin I, but not active on natural angiotensinogen. Also hydrolyzes Bz-Arg-p-nitroanilide.. The chain is Kallikrein 1-related peptidase b16 (Klk1b16) from Mus musculus (Mouse).